Reading from the N-terminus, the 1126-residue chain is Carbamoyl phosphate synthase large chain (1126 aa).

The tract at residues 1–402 is carboxyphosphate synthetic domain; that stretch reads MPKRTDIKSV…SLGKAMRSID (402 aa). Residues arginine 129, arginine 169, glycine 175, glycine 176, glutamate 208, isoleucine 210, glutamate 215, glycine 241, valine 242, histidine 243, glutamine 285, and glutamate 299 each coordinate ATP. One can recognise an ATP-grasp 1 domain in the interval 133–328; the sequence is KKVVEEAGAE…IAKIATKLAL (196 aa). 3 residues coordinate Mg(2+): glutamine 285, glutamate 299, and asparagine 301. Mn(2+) contacts are provided by glutamine 285, glutamate 299, and asparagine 301. The tract at residues 403 to 551 is oligomerization domain; that stretch reads KRHMGFNWDG…YYYSCYADET (149 aa). The carbamoyl phosphate synthetic domain stretch occupies residues 552–962; the sequence is ELRPRDREAV…AFAKSQLAAY (411 aa). The region spanning 681-881 is the ATP-grasp 2 domain; it reads GEVLKKADMN…LAKAAARIMV (201 aa). ATP-binding residues include arginine 717, lysine 765, leucine 767, glutamate 772, glycine 797, valine 798, histidine 799, serine 800, glutamine 840, and glutamate 852. Glutamine 840, glutamate 852, and asparagine 854 together coordinate Mg(2+). Mn(2+)-binding residues include glutamine 840, glutamate 852, and asparagine 854. The allosteric domain stretch occupies residues 963–1126; it reads EGGLPTSGNV…TQLFELESRD (164 aa). The 163-residue stretch at 964–1126 folds into the MGS-like domain; that stretch reads GGLPTSGNVF…TQLFELESRD (163 aa).

The protein belongs to the CarB family. Composed of two chains; the small (or glutamine) chain promotes the hydrolysis of glutamine to ammonia, which is used by the large (or ammonia) chain to synthesize carbamoyl phosphate. Tetramer of heterodimers (alpha,beta)4. It depends on Mg(2+) as a cofactor. Requires Mn(2+) as cofactor.

The enzyme catalyses hydrogencarbonate + L-glutamine + 2 ATP + H2O = carbamoyl phosphate + L-glutamate + 2 ADP + phosphate + 2 H(+). It carries out the reaction hydrogencarbonate + NH4(+) + 2 ATP = carbamoyl phosphate + 2 ADP + phosphate + 2 H(+). Its pathway is amino-acid biosynthesis; L-arginine biosynthesis; carbamoyl phosphate from bicarbonate: step 1/1. The protein operates within pyrimidine metabolism; UMP biosynthesis via de novo pathway; (S)-dihydroorotate from bicarbonate: step 1/3. Large subunit of the glutamine-dependent carbamoyl phosphate synthetase (CPSase). CPSase catalyzes the formation of carbamoyl phosphate from the ammonia moiety of glutamine, carbonate, and phosphate donated by ATP, constituting the first step of 2 biosynthetic pathways, one leading to arginine and/or urea and the other to pyrimidine nucleotides. The large subunit (synthetase) binds the substrates ammonia (free or transferred from glutamine from the small subunit), hydrogencarbonate and ATP and carries out an ATP-coupled ligase reaction, activating hydrogencarbonate by forming carboxy phosphate which reacts with ammonia to form carbamoyl phosphate. The protein is Carbamoyl phosphate synthase large chain of Bifidobacterium adolescentis (strain ATCC 15703 / DSM 20083 / NCTC 11814 / E194a).